A 1164-amino-acid chain; its full sequence is Protein PLASTID MOVEMENT IMPAIRED 1-RELATED 1 (1164 aa).

Residues 30 to 54 are disordered; the sequence is KNPRGSVAGSNKTPTKPLSRSNLAE. Polar residues predominate over residues 37–51; it reads AGSNKTPTKPLSRSN. In terms of domain architecture, C2 NT-type spans 69 to 217; sequence INHVRNRRFN…TLSMSFGYTV (149 aa). The segment covering 224-263 has biased composition (polar residues); sequence PASSGSTQNFRSSSNVKQTSNNTGLTRAISAKSSLGNGKS. Disordered stretches follow at residues 224-268, 466-486, 1038-1063, and 1124-1164; these read PASS…SRRY, APEEGNKISPKNEESVVPKDA, SELKKTDEEEEADASDAKKEEKPMEE, and GSAK…IMPK. 2 stretches are compositionally biased toward basic and acidic residues: residues 469 to 486 and 1052 to 1062; these read EGNKISPKNEESVVPKDA and SDAKKEEKPME.

Its subcellular location is the cytoplasm. Together with PMI1, necessary for chloroplast and nuclear photorelocation movements via the regulation of chloroplast-actin (cp-actin) filaments in pavement cells. The protein is Protein PLASTID MOVEMENT IMPAIRED 1-RELATED 1 of Arabidopsis thaliana (Mouse-ear cress).